The chain runs to 448 residues: Phosphoglucosamine mutase (448 aa).

The Phosphoserine intermediate role is filled by serine 104. Residues serine 104, aspartate 241, aspartate 243, and aspartate 245 each contribute to the Mg(2+) site. The residue at position 104 (serine 104) is a Phosphoserine.

Belongs to the phosphohexose mutase family. Mg(2+) is required as a cofactor. Post-translationally, activated by phosphorylation.

It carries out the reaction alpha-D-glucosamine 1-phosphate = D-glucosamine 6-phosphate. Functionally, catalyzes the conversion of glucosamine-6-phosphate to glucosamine-1-phosphate. This Nocardioides sp. (strain ATCC BAA-499 / JS614) protein is Phosphoglucosamine mutase.